Here is a 103-residue protein sequence, read N- to C-terminus: uncharacterized protein (103 aa).

This is an uncharacterized protein from Pseudescherichia vulneris (Escherichia vulneris).